A 306-amino-acid polypeptide reads, in one-letter code: High osmolarity signaling protein MOS1 (306 aa).

The Cytoplasmic portion of the chain corresponds to 1 to 23 (MEHSRPYGGRKRMSLGNILGDPF). A helical membrane pass occupies residues 24 to 44 (ALATISISLLAWFITFISCVI). Over 45-67 (AQVQANKNKGLPDKDNPDGNFPP) the chain is Extracellular. A helical membrane pass occupies residues 68 to 88 (FAWWAVVYSLFLIVGVVIVVA). At 89 to 96 (SDAIQTYH) the chain is on the cytoplasmic side. The helical transmembrane segment at 97–117 (VAVTGYLAGGMVLVTSGVNSL) threads the bilayer. Residues 118 to 126 (VYSKNGARE) lie on the Extracellular side of the membrane. A helical membrane pass occupies residues 127 to 147 (AAAAGFILLSMVVIVWIFYFG). The Cytoplasmic portion of the chain corresponds to 148-306 (STPSSTPRAF…IAPSNYLILL (159 aa)). The tract at residues 204 to 242 (FENPSPVGGASQAPTAPTMPTYGNNTMQPNNKSNDEEVL) is disordered. Positions 224 to 235 (TYGNNTMQPNNK) are enriched in polar residues. Residues 246–306 (DYPYQAKAIY…IAPSNYLILL (61 aa)) enclose the SH3 domain.

The protein belongs to the SHO1 family. As to quaternary structure, forms homooligomers.

It is found in the cell membrane. Functionally, plasma membrane osmosensor that activates the high osmolarity glycerol (HOG) MAPK signaling pathway in response to high osmolarity. Affects fungal virulence. In Metarhizium robertsii (strain ARSEF 23 / ATCC MYA-3075) (Metarhizium anisopliae (strain ARSEF 23)), this protein is High osmolarity signaling protein MOS1 (MOS1).